Reading from the N-terminus, the 212-residue chain is Ribosomal RNA small subunit methyltransferase G (212 aa).

S-adenosyl-L-methionine is bound by residues G80, L85, 131 to 132 (AE), and R146.

The protein belongs to the methyltransferase superfamily. RNA methyltransferase RsmG family.

It is found in the cytoplasm. It catalyses the reaction guanosine(527) in 16S rRNA + S-adenosyl-L-methionine = N(7)-methylguanosine(527) in 16S rRNA + S-adenosyl-L-homocysteine. In terms of biological role, specifically methylates the N7 position of guanine in position 527 of 16S rRNA. The sequence is that of Ribosomal RNA small subunit methyltransferase G from Stenotrophomonas maltophilia (strain R551-3).